The following is a 267-amino-acid chain: uncharacterized protein (267 aa).

The ABC transporter domain occupies 17–248 (LKVENLTKIF…PRDRTSIEFL (232 aa)). ATP is bound at residue 53–60 (GPSGCGKT).

This sequence belongs to the ABC transporter superfamily.

This is an uncharacterized protein from Methanocaldococcus jannaschii (strain ATCC 43067 / DSM 2661 / JAL-1 / JCM 10045 / NBRC 100440) (Methanococcus jannaschii).